The chain runs to 1446 residues: E3 ubiquitin-protein ligase listerin (1446 aa).

11 HEAT repeats span residues 71-108, 115-153, 324-361, 363-399, 413-450, 630-669, 684-721, 1046-1083, 1107-1144, 1165-1202, and 1251-1289; these read QTREKGLKELMELINTENSSIESSYEHFCGLVAQLTTD, MLTMKVISQFLTKLKKSASKGLKKIIPFVLFAKSDVTNG, SLQKGIYPRLLNLIRKKGNHWRVLKHYLLPAVSVLLQK, ENPALITSIITSFTDNLPWQAEASMNAIHCWFCTFSD, EILKDLSPLIVEMSNQSMHFNTAEATECISGLIHWIIE, AENVDFLISLLQSLDSKEDPEERKNLVLKLLSALFDAEDE, GDFEQFFEKLFANMEEEDAERVLEIAARFDKLVGFCDA, LRALFVISEFPTSFSNDDDVANQEFIPELSVFKYPAFQ, SVARLLMPIMFKLENAAALKSNEDSELPVSTNRRKLSL, LLDLTLLPLENTKDSGFSQEHRVAYCDVIDPFFKNALN, and FKSMTLLPAAIRLFYKGMPNCFMPMFQETVTKYASRLLI. The RING-type zinc finger occupies 1395–1442; the sequence is CTICMMTVHQQTHQLPKIKCKQCKNKFHSNCLYKWFESSNQSTCPLCR.

This sequence belongs to the LTN1 family. Component of the ribosome quality control complex (RQC), composed of at least the E3 ubiquitin ligase ltn1 and nemf. The complex probably also contains tcf25 as well as vcp/p97 and its ubiquitin-binding cofactors. RQC forms a stable complex with 60S ribosomal subunits.

The protein resides in the cytoplasm. It is found in the cytosol. It carries out the reaction S-ubiquitinyl-[E2 ubiquitin-conjugating enzyme]-L-cysteine + [acceptor protein]-L-lysine = [E2 ubiquitin-conjugating enzyme]-L-cysteine + N(6)-ubiquitinyl-[acceptor protein]-L-lysine.. It participates in protein modification; protein ubiquitination. Its function is as follows. E3 ubiquitin-protein ligase. Component of the ribosome quality control complex (RQC), a ribosome-associated complex that mediates ubiquitination and extraction of incompletely synthesized nascent chains for proteasomal degradation. Ubiquitination leads to vcp/p97 recruitment for extraction and degradation of the incomplete translation product. This Caenorhabditis elegans protein is E3 ubiquitin-protein ligase listerin.